We begin with the raw amino-acid sequence, 502 residues long: Glycerol kinase (502 aa).

Threonine 14 contacts ADP. Residues threonine 14, threonine 15, and serine 16 each contribute to the ATP site. Threonine 14 lines the sn-glycerol 3-phosphate pocket. Arginine 18 provides a ligand contact to ADP. Sn-glycerol 3-phosphate is bound by residues arginine 84, glutamate 85, tyrosine 136, and aspartate 246. Positions 84, 85, 136, 246, and 247 each coordinate glycerol. 2 residues coordinate ADP: threonine 268 and glycine 311. ATP contacts are provided by threonine 268, glycine 311, glutamine 315, and glycine 412. Residues glycine 412 and asparagine 416 each contribute to the ADP site.

Belongs to the FGGY kinase family. As to quaternary structure, homotetramer and homodimer (in equilibrium). Heterodimer with EIIA-Glc. Binds 1 zinc ion per glycerol kinase EIIA-Glc dimer. The zinc ion is important for dimerization.

The enzyme catalyses glycerol + ATP = sn-glycerol 3-phosphate + ADP + H(+). It participates in polyol metabolism; glycerol degradation via glycerol kinase pathway; sn-glycerol 3-phosphate from glycerol: step 1/1. Its activity is regulated as follows. Activity of this regulatory enzyme is affected by several metabolites. Allosterically and non-competitively inhibited by fructose 1,6-bisphosphate (FBP) and unphosphorylated phosphocarrier protein EIIA-Glc (III-Glc), an integral component of the bacterial phosphotransferase (PTS) system. Key enzyme in the regulation of glycerol uptake and metabolism. Catalyzes the phosphorylation of glycerol to yield sn-glycerol 3-phosphate. This Citrobacter koseri (strain ATCC BAA-895 / CDC 4225-83 / SGSC4696) protein is Glycerol kinase.